A 33-amino-acid chain; its full sequence is Alpha-amanitin proprotein (33 aa).

A propeptide spanning residues 1 to 10 (MSDINATRLP) is cleaved from the precursor. (3R,4R)-4,5-dihydroxyisoleucine; in form alpha-amanitin is present on isoleucine 11. A (3R,4S)-4-hydroxyisoleucine; in form gamma-amanitin modification is found at isoleucine 11. A cross-link (cyclopeptide (Ile-Pro)) is located at residues 11 to 18 (IWGIGCNP). The segment at residues 12 to 16 (WGIGC) is a cross-link (2'-cysteinyl-6'-hydroxytryptophan sulfoxide (Trp-Cys)). A 4-hydroxyproline modification is found at proline 18. Residues 19-33 (SVGDEVTALLASGEA) constitute a propeptide that is removed on maturation.

It belongs to the MSDIN fungal toxin family. Processed by the macrocyclase-peptidase enzyme POPB to yield a toxic cyclic decapeptide. POPB first removes 10 residues from the N-terminus. Conformational trapping of the remaining peptide forces the enzyme to release this intermediate rather than proceed to macrocyclization. The enzyme rebinds the remaining peptide in a different conformation and catalyzes macrocyclization of the N-terminal 8 residues.

Major toxin belonging to the bicyclic octapeptides amatoxins that acts by binding non-competitively to RNA polymerase II and greatly slowing the elongation of transcripts from target promoters. The sequence is that of Alpha-amanitin proprotein from Amanita rimosa.